The primary structure comprises 510 residues: Probable ADP-ribosylation factor-binding protein C1F3.05 (510 aa).

The VHS domain occupies Ala-14–Pro-150. One can recognise a GAT domain in the interval Leu-177–Leu-301. The 120-residue stretch at Thr-391–Leu-510 folds into the GAE domain.

It localises to the golgi apparatus. The protein localises to the trans-Golgi network. Its function is as follows. May play a role in the regulation of membrane traffic through the trans-Golgi network. The protein is Probable ADP-ribosylation factor-binding protein C1F3.05 of Schizosaccharomyces pombe (strain 972 / ATCC 24843) (Fission yeast).